We begin with the raw amino-acid sequence, 512 residues long: Protein singed (512 aa).

It belongs to the fascin family. In terms of assembly, interacts with Rab35, with stronger binding to the Rab35-GTP form compared to the Rab35-GDP form.

It localises to the cytoplasm. It is found in the cytoskeleton. In terms of biological role, acts as an actin bundling protein. May have a role in the asymmetric organization and/or movement of cytoplasmic components. It has a role in somatic cells during the formation of adult bristles and hairs, and in the female germline during oogenesis. This is Protein singed (sn) from Drosophila melanogaster (Fruit fly).